Reading from the N-terminus, the 89-residue chain is Snake venom serine protease rhinocerase (89 aa).

Residues 1–89 (VIGGAECDIN…KVFDYIPWIK (89 aa)) form the Peptidase S1 domain. The active-site Charge relay system is the Asp45. Cys64 and Cys69 form a disulfide bridge.

It belongs to the peptidase S1 family. Snake venom subfamily. In terms of processing, glycosylated. In terms of tissue distribution, expressed by the venom gland.

The protein resides in the secreted. With respect to regulation, inhibited by PMSF. Not inhibited by benzamidine. Its function is as follows. Snake venom serine protease that cleaves fibrinogen alpha and beta chains (FGA and FGB), but not gamma chains. Exhibits fibrinolytic and kininogenolytic. Preferentially cleaves after Arg and Lys residues. The sequence is that of Snake venom serine protease rhinocerase from Bitis rhinoceros (West African gaboon viper).